We begin with the raw amino-acid sequence, 438 residues long: 23S rRNA (uracil(1939)-C(5))-methyltransferase RlmD (438 aa).

The TRAM domain occupies Lys10–Lys68. [4Fe-4S] cluster contacts are provided by Cys81, Cys87, Cys90, and Cys168. 6 residues coordinate S-adenosyl-L-methionine: Gln271, Phe300, Asn305, Glu321, Asp348, and Asp369. Residue Cys395 is the Nucleophile of the active site.

The protein belongs to the class I-like SAM-binding methyltransferase superfamily. RNA M5U methyltransferase family. RlmD subfamily.

It catalyses the reaction uridine(1939) in 23S rRNA + S-adenosyl-L-methionine = 5-methyluridine(1939) in 23S rRNA + S-adenosyl-L-homocysteine + H(+). Its function is as follows. Catalyzes the formation of 5-methyl-uridine at position 1939 (m5U1939) in 23S rRNA. The protein is 23S rRNA (uracil(1939)-C(5))-methyltransferase RlmD of Haemophilus influenzae (strain ATCC 51907 / DSM 11121 / KW20 / Rd).